Reading from the N-terminus, the 424-residue chain is MFLLPRFVLVSCIIGSLGFDNPPTNVVSHLNGDWFLFGDSRSDCNHVVTTNPRNYSYMDLNPALCGSGKISSKAGNSIFRSFHFTDFYNYTGEGQQIIFYEGVNFTPYHAFKCTTSGSNDIWMQNKGLFYTQVYKNMAVYRSLTFVNVPYVYNGSAQSTALCKSGSLVLNNPAYIAREANFGDYYYKVEADFYLSGCDEYIVPLCIFNGKFLSNTKYYDDSQYYFNKDTGVIYGLNSTETITTGFDFNCHYLVLPSGNYLAISNELLLTVPTKAICLNKRKDFTPVQVVDSRWNNARQSDNMTAVACQPPYCYFRNSTTNYVGVYDINHGDAGFTSILSGLLYDSPCFSQQGVFRYDNVSSVWPLYPYGRCPTAADINTPDVPICVYDPLPIILLGILLGVAVIIIVVLLLYFMVDNGTRLHDA.

An N-terminal signal peptide occupies residues 1–16; that stretch reads MFLLPRFVLVSCIIGS. The tract at residues 7–127 is esterase domain 1; the sequence is FVLVSCIIGS…SNDIWMQNKG (121 aa). The Virion surface portion of the chain corresponds to 17–392; the sequence is LGFDNPPTNV…PICVYDPLPI (376 aa). Serine 40 serves as the catalytic Nucleophile. Cysteine 44 and cysteine 65 are disulfide-bonded. Asparagine 54, asparagine 89, asparagine 153, asparagine 236, and asparagine 301 each carry an N-linked (GlcNAc...) asparagine; by host glycan. 3 disulfides stabilise this stretch: cysteine 113–cysteine 162, cysteine 197–cysteine 276, and cysteine 205–cysteine 249. A receptor binding region spans residues 128-266; sequence LFYTQVYKNM…GNYLAISNEL (139 aa). The segment at 267-379 is esterase domain 2; that stretch reads LLTVPTKAIC…RCPTAADINT (113 aa). Cysteine 307 and cysteine 312 are joined by a disulfide. The N-linked (GlcNAc...) asparagine; by host glycan is linked to asparagine 316. Catalysis depends on charge relay system residues aspartate 326 and histidine 329. The cysteines at positions 347 and 371 are disulfide-linked. N-linked (GlcNAc...) asparagine; by host glycosylation occurs at asparagine 358. A helical membrane pass occupies residues 393–413; that stretch reads ILLGILLGVAVIIIVVLLLYF. Residues 414–424 are Intravirion-facing; the sequence is MVDNGTRLHDA. N-linked (GlcNAc...) asparagine; by host glycosylation occurs at asparagine 417.

This sequence belongs to the influenza type C/coronaviruses hemagglutinin-esterase family. In terms of assembly, homodimer; disulfide-linked. Forms a complex with the M protein in the pre-Golgi. Associates then with S-M complex to form a ternary complex S-M-HE. N-glycosylated in the RER. In terms of processing, N-glycosylated in the host RER.

The protein resides in the virion membrane. It localises to the host cell membrane. The enzyme catalyses N-acetyl-9-O-acetylneuraminate + H2O = N-acetylneuraminate + acetate + H(+). It catalyses the reaction N-acetyl-4-O-acetylneuraminate + H2O = N-acetylneuraminate + acetate + H(+). Its function is as follows. Structural protein that makes short spikes at the surface of the virus. Contains receptor binding and receptor-destroying activities. Mediates de-O-acetylation of N-acetyl-4-O-acetylneuraminic acid, which is probably the receptor determinant recognized by the virus on the surface of erythrocytes and susceptible cells. This receptor-destroying activity is important for virus release as it probably helps preventing self-aggregation and ensures the efficient spread of the progeny virus from cell to cell. May serve as a secondary viral attachment protein for initiating infection, the spike protein being the major one. May become a target for both the humoral and the cellular branches of the immune system. This is Hemagglutinin-esterase from Bovine coronavirus (strain 98TXSF-110-ENT) (BCoV-ENT).